The sequence spans 348 residues: Uroporphyrinogen decarboxylase (348 aa).

Residues 28–32, Asp78, Tyr154, Thr209, and His325 each bind substrate; that span reads RQAGR.

This sequence belongs to the uroporphyrinogen decarboxylase family. As to quaternary structure, homodimer.

It localises to the cytoplasm. The enzyme catalyses uroporphyrinogen III + 4 H(+) = coproporphyrinogen III + 4 CO2. It functions in the pathway porphyrin-containing compound metabolism; protoporphyrin-IX biosynthesis; coproporphyrinogen-III from 5-aminolevulinate: step 4/4. In terms of biological role, catalyzes the decarboxylation of four acetate groups of uroporphyrinogen-III to yield coproporphyrinogen-III. The polypeptide is Uroporphyrinogen decarboxylase (Rhodopseudomonas palustris (strain BisB5)).